Here is a 441-residue protein sequence, read N- to C-terminus: Tubulin beta chain (441 aa).

Residues Gln11, Glu69, Ser138, Gly142, Thr143, Gly144, Asn204, and Asn226 each contribute to the GTP site. Glu69 contacts Mg(2+).

It belongs to the tubulin family. In terms of assembly, dimer of alpha and beta chains. A typical microtubule is a hollow water-filled tube with an outer diameter of 25 nm and an inner diameter of 15 nM. Alpha-beta heterodimers associate head-to-tail to form protofilaments running lengthwise along the microtubule wall with the beta-tubulin subunit facing the microtubule plus end conferring a structural polarity. Microtubules usually have 13 protofilaments but different protofilament numbers can be found in some organisms and specialized cells. Mg(2+) is required as a cofactor.

Its subcellular location is the cytoplasm. It localises to the cytoskeleton. Functionally, tubulin is the major constituent of microtubules, a cylinder consisting of laterally associated linear protofilaments composed of alpha- and beta-tubulin heterodimers. Microtubules grow by the addition of GTP-tubulin dimers to the microtubule end, where a stabilizing cap forms. Below the cap, tubulin dimers are in GDP-bound state, owing to GTPase activity of alpha-tubulin. The protein is Tubulin beta chain of Babesia bovis.